The sequence spans 185 residues: NADH-quinone oxidoreductase subunit B (185 aa).

The [4Fe-4S] cluster site is built by Cys-38, Cys-39, Cys-104, and Cys-133.

Belongs to the complex I 20 kDa subunit family. NDH-1 is composed of 14 different subunits. Subunits NuoB, C, D, E, F, and G constitute the peripheral sector of the complex. Requires [4Fe-4S] cluster as cofactor.

Its subcellular location is the cell membrane. It catalyses the reaction a quinone + NADH + 5 H(+)(in) = a quinol + NAD(+) + 4 H(+)(out). Functionally, NDH-1 shuttles electrons from NADH, via FMN and iron-sulfur (Fe-S) centers, to quinones in the respiratory chain. The immediate electron acceptor for the enzyme in this species is believed to be a menaquinone. Couples the redox reaction to proton translocation (for every two electrons transferred, four hydrogen ions are translocated across the cytoplasmic membrane), and thus conserves the redox energy in a proton gradient. In Cutibacterium acnes (strain DSM 16379 / KPA171202) (Propionibacterium acnes), this protein is NADH-quinone oxidoreductase subunit B.